A 104-amino-acid chain; its full sequence is MIRKAFVMQVNPDAHEEYQRRHNPIWPELEAVLKSHGVHNYAIYLDKARNLLFAMVEIESEERWNAVASTDVCQRWWKYMTDVMPANPDNSPVSSELQEVFYLP.

Y18 lines the substrate pocket. The Proton donor role is filled by H22. Substrate is bound by residues Y41 and 76–77; that span reads WW.

It belongs to the rhamnose mutarotase family. As to quaternary structure, homodimer.

It is found in the cytoplasm. The enzyme catalyses alpha-L-rhamnose = beta-L-rhamnose. Its pathway is carbohydrate metabolism; L-rhamnose metabolism. Involved in the anomeric conversion of L-rhamnose. The sequence is that of L-rhamnose mutarotase from Shigella flexneri serotype 5b (strain 8401).